Here is a 205-residue protein sequence, read N- to C-terminus: Bcl2-associated agonist of cell death (205 aa).

The disordered stretch occupies residues 1-139 (MGTPKQPSLA…PFRGRSRSAP (139 aa)). Phosphoserine is present on S67. A compositionally biased stretch (polar residues) spans 85–98 (IVQQQPGQAANNSH). A Phosphoserine modification is found at S113. Acidic residues predominate over residues 118–128 (TEEDEGMEEEL). A Phosphoserine modification is found at S129. Residues R132 and R134 each carry the asymmetric dimethylarginine; by PRMT1 modification. Position 135 is a phosphoserine (S135). S137 is modified (phosphoserine; by PKA, PKB, PAK1, RPS6KA1, RPS6KB1 and PKC/PRKCQ). Residues 148–162 (YGRELRRMSDEFEGS) carry the BH3 motif. S156 and S171 each carry phosphoserine. Positions 161-180 (GSFKGLPRPKSAGTATQMRQ) are disordered.

Belongs to the Bcl-2 family. As to quaternary structure, forms heterodimers with the anti-apoptotic proteins, Bcl-X(L), Bcl-2 and Bcl-W. Also binds protein S100A10. The Ser-113/Ser-137 phosphorylated form binds 14-3-3 proteins. Interacts with AKT1 and PIM3. Interacts with HIF3A (via C-terminus domain); the interaction reduces the binding between BAD and BAX. Interacts (via BH3 domain) with NOL3 (via CARD domain); preventing the association of BAD with BCL2. Interacts with GIMAP3/IAN4 and GIMAP5/IAN5. In terms of processing, phosphorylated at one or more of Ser-113, Ser-137, Ser-156 and Ser-171 in response to survival stimuli, which blocks its pro-apoptotic activity. Phosphorylation on Ser-137 or Ser-113 promotes heterodimerization with 14-3-3 proteins. This interaction then facilitates the phosphorylation at Ser-156, a site within the BH3 motif, leading to the release of Bcl-X(L) and the promotion of cell survival. Ser-137 is the major site of AKT/PKB phosphorylation, Ser-156 the major site of protein kinase A (CAPK) phosphorylation. Post-translationally, methylation at Arg-132 and Arg-134 by PRMT1 inhibits Akt-mediated phosphorylation at Ser-137. As to expression, expressed in all tissues tested, including brain, liver, spleen and heart. In the brain, restricted to epithelial cells of the choroid plexus. Isoform alpha is the more abundant form.

It is found in the mitochondrion outer membrane. Its subcellular location is the cytoplasm. Promotes cell death. Successfully competes for the binding to Bcl-X(L), Bcl-2 and Bcl-W, thereby affecting the level of heterodimerization of these proteins with BAX. Can reverse the death repressor activity of Bcl-X(L), but not that of Bcl-2. Appears to act as a link between growth factor receptor signaling and the apoptotic pathways. The protein is Bcl2-associated agonist of cell death (Bad) of Rattus norvegicus (Rat).